A 200-amino-acid polypeptide reads, in one-letter code: Lipopolysaccharide core heptose(II)-phosphate phosphatase (200 aa).

An N-terminal signal peptide occupies residues 1–25 (MLAFCRSSLKSKKYFIILLALAAIA).

It belongs to the phosphoglycerate mutase family. Ais subfamily.

The protein resides in the periplasm. The protein operates within bacterial outer membrane biogenesis; lipopolysaccharide metabolism. Functionally, catalyzes the dephosphorylation of heptose(II) of the outer membrane lipopolysaccharide core. This chain is Lipopolysaccharide core heptose(II)-phosphate phosphatase, found in Escherichia coli (strain SE11).